We begin with the raw amino-acid sequence, 307 residues long: tRNA pseudouridine synthase B (307 aa).

Residue aspartate 41 is the Nucleophile of the active site.

The protein belongs to the pseudouridine synthase TruB family. Type 1 subfamily.

The enzyme catalyses uridine(55) in tRNA = pseudouridine(55) in tRNA. Responsible for synthesis of pseudouridine from uracil-55 in the psi GC loop of transfer RNAs. The chain is tRNA pseudouridine synthase B from Prochlorococcus marinus (strain AS9601).